We begin with the raw amino-acid sequence, 142 residues long: SPbeta prophage-derived deoxyuridine 5'-triphosphate nucleotidohydrolase YosS (142 aa).

Residues Ser-62 and Asn-74 each contribute to the dUMP site. Asp-80 (proton acceptor) is an active-site residue. Residues Tyr-83 and Phe-91 each contribute to the dUMP site.

This sequence belongs to the dUTPase family. In terms of assembly, homotrimer. Mg(2+) is required as a cofactor.

It carries out the reaction dUTP + H2O = dUMP + diphosphate + H(+). It participates in pyrimidine metabolism; dUMP biosynthesis; dUMP from dCTP (dUTP route): step 2/2. In terms of biological role, involved in nucleotide metabolism: produces dUMP, the immediate precursor of thymidine nucleotides and decreases the intracellular concentration of dUTP, so that uracil cannot be incorporated into DNA. The Ser-62 side chain changes its position upon ligand-binding to make contacts with the nucleotide phosphates. This is SPbeta prophage-derived deoxyuridine 5'-triphosphate nucleotidohydrolase YosS from Bacillus subtilis (strain 168).